We begin with the raw amino-acid sequence, 130 residues long: Spore coat protein M (130 aa).

Its function is as follows. Involved in spore outer coat assembly. May be part of a cross-linked insoluble skeleton that surrounds the spore, serves as a matrix for the assembly of additional outer coat material, and confers structural stability to the final structure. The polypeptide is Spore coat protein M (cotM) (Bacillus subtilis (strain 168)).